The chain runs to 245 residues: Ubiquinone/menaquinone biosynthesis C-methyltransferase UbiE (245 aa).

S-adenosyl-L-methionine-binding positions include threonine 71, aspartate 92, and 118-119 (DA).

The protein belongs to the class I-like SAM-binding methyltransferase superfamily. MenG/UbiE family.

It catalyses the reaction a 2-demethylmenaquinol + S-adenosyl-L-methionine = a menaquinol + S-adenosyl-L-homocysteine + H(+). The enzyme catalyses a 2-methoxy-6-(all-trans-polyprenyl)benzene-1,4-diol + S-adenosyl-L-methionine = a 5-methoxy-2-methyl-3-(all-trans-polyprenyl)benzene-1,4-diol + S-adenosyl-L-homocysteine + H(+). The protein operates within quinol/quinone metabolism; menaquinone biosynthesis; menaquinol from 1,4-dihydroxy-2-naphthoate: step 2/2. It functions in the pathway cofactor biosynthesis; ubiquinone biosynthesis. Methyltransferase required for the conversion of demethylmenaquinol (DMKH2) to menaquinol (MKH2) and the conversion of 2-polyprenyl-6-methoxy-1,4-benzoquinol (DDMQH2) to 2-polyprenyl-3-methyl-6-methoxy-1,4-benzoquinol (DMQH2). The chain is Ubiquinone/menaquinone biosynthesis C-methyltransferase UbiE from Neisseria gonorrhoeae (strain ATCC 700825 / FA 1090).